We begin with the raw amino-acid sequence, 216 residues long: DegV domain-containing protein UU190 (216 aa).

The DegV domain occupies 1 to 215 (MLWKNLDELF…LNNFAILIEA (215 aa)). Residue S26 coordinates hexadecanoate.

Functionally, may bind long-chain fatty acids, such as palmitate, and may play a role in lipid transport or fatty acid metabolism. The protein is DegV domain-containing protein UU190 of Ureaplasma parvum serovar 3 (strain ATCC 700970).